We begin with the raw amino-acid sequence, 96 residues long: MSRISIEQVKHVADLARLAITDEEAEMFTKQLDAIITFAEQLNELDTENVPPTSHVLDMRNVMREDIPEPGLPREEVLKNAPDQQDGQFRVPAILE.

It belongs to the GatC family. As to quaternary structure, heterotrimer of A, B and C subunits.

It catalyses the reaction L-glutamyl-tRNA(Gln) + L-glutamine + ATP + H2O = L-glutaminyl-tRNA(Gln) + L-glutamate + ADP + phosphate + H(+). The enzyme catalyses L-aspartyl-tRNA(Asn) + L-glutamine + ATP + H2O = L-asparaginyl-tRNA(Asn) + L-glutamate + ADP + phosphate + 2 H(+). Allows the formation of correctly charged Asn-tRNA(Asn) or Gln-tRNA(Gln) through the transamidation of misacylated Asp-tRNA(Asn) or Glu-tRNA(Gln) in organisms which lack either or both of asparaginyl-tRNA or glutaminyl-tRNA synthetases. The reaction takes place in the presence of glutamine and ATP through an activated phospho-Asp-tRNA(Asn) or phospho-Glu-tRNA(Gln). This Geobacillus kaustophilus (strain HTA426) protein is Aspartyl/glutamyl-tRNA(Asn/Gln) amidotransferase subunit C.